A 204-amino-acid chain; its full sequence is LexA repressor (204 aa).

A DNA-binding region (H-T-H motif) is located at residues 30–50 (IREICQGVGLSSPSTVHHHLK). Residues serine 125 and lysine 162 each act as for autocatalytic cleavage activity in the active site.

This sequence belongs to the peptidase S24 family. As to quaternary structure, homodimer.

It carries out the reaction Hydrolysis of Ala-|-Gly bond in repressor LexA.. In terms of biological role, represses a number of genes involved in the response to DNA damage (SOS response), including recA and lexA. In the presence of single-stranded DNA, RecA interacts with LexA causing an autocatalytic cleavage which disrupts the DNA-binding part of LexA, leading to derepression of the SOS regulon and eventually DNA repair. The sequence is that of LexA repressor from Carboxydothermus hydrogenoformans (strain ATCC BAA-161 / DSM 6008 / Z-2901).